Here is a 335-residue protein sequence, read N- to C-terminus: Ornithine carbamoyltransferase (335 aa).

Carbamoyl phosphate is bound by residues 57-60 (STRT), R108, and 135-138 (HPTQ). L-ornithine-binding positions include N168, D232, and 236 to 237 (SM). Carbamoyl phosphate contacts are provided by residues 274-275 (CL) and R319.

The protein belongs to the aspartate/ornithine carbamoyltransferase superfamily. OTCase family.

It is found in the cytoplasm. The catalysed reaction is carbamoyl phosphate + L-ornithine = L-citrulline + phosphate + H(+). It participates in amino-acid degradation; L-arginine degradation via ADI pathway; carbamoyl phosphate from L-arginine: step 2/2. Reversibly catalyzes the transfer of the carbamoyl group from carbamoyl phosphate (CP) to the N(epsilon) atom of ornithine (ORN) to produce L-citrulline. In Limosilactobacillus reuteri (strain DSM 20016) (Lactobacillus reuteri), this protein is Ornithine carbamoyltransferase.